The sequence spans 118 residues: Ribonuclease P protein component (118 aa).

This sequence belongs to the RnpA family. In terms of assembly, consists of a catalytic RNA component (M1 or rnpB) and a protein subunit.

It carries out the reaction Endonucleolytic cleavage of RNA, removing 5'-extranucleotides from tRNA precursor.. Functionally, RNaseP catalyzes the removal of the 5'-leader sequence from pre-tRNA to produce the mature 5'-terminus. It can also cleave other RNA substrates such as 4.5S RNA. The protein component plays an auxiliary but essential role in vivo by binding to the 5'-leader sequence and broadening the substrate specificity of the ribozyme. The polypeptide is Ribonuclease P protein component (Vibrio parahaemolyticus serotype O3:K6 (strain RIMD 2210633)).